Here is a 503-residue protein sequence, read N- to C-terminus: ATP synthase subunit alpha (503 aa).

Residue 170-177 (GDKQTGKT) coordinates ATP.

Belongs to the ATPase alpha/beta chains family. In terms of assembly, F-type ATPases have 2 components, CF(1) - the catalytic core - and CF(0) - the membrane proton channel. CF(1) has five subunits: alpha(3), beta(3), gamma(1), delta(1), epsilon(1). CF(0) has three main subunits: a(1), b(2) and c(9-12). The alpha and beta chains form an alternating ring which encloses part of the gamma chain. CF(1) is attached to CF(0) by a central stalk formed by the gamma and epsilon chains, while a peripheral stalk is formed by the delta and b chains.

The protein localises to the cell inner membrane. It catalyses the reaction ATP + H2O + 4 H(+)(in) = ADP + phosphate + 5 H(+)(out). In terms of biological role, produces ATP from ADP in the presence of a proton gradient across the membrane. The alpha chain is a regulatory subunit. The protein is ATP synthase subunit alpha of Helicobacter pylori (strain HPAG1).